An 82-amino-acid polypeptide reads, in one-letter code: Small ribosomal subunit protein uS17 (82 aa).

Belongs to the universal ribosomal protein uS17 family. In terms of assembly, part of the 30S ribosomal subunit.

Functionally, one of the primary rRNA binding proteins, it binds specifically to the 5'-end of 16S ribosomal RNA. This Shewanella woodyi (strain ATCC 51908 / MS32) protein is Small ribosomal subunit protein uS17.